We begin with the raw amino-acid sequence, 70 residues long: Translational regulator CsrA (70 aa).

Belongs to the CsrA/RsmA family. As to quaternary structure, homodimer; the beta-strands of each monomer intercalate to form a hydrophobic core, while the alpha-helices form wings that extend away from the core.

Its subcellular location is the cytoplasm. Functionally, a translational regulator that binds mRNA to regulate translation initiation and/or mRNA stability. Usually binds in the 5'-UTR at or near the Shine-Dalgarno sequence preventing ribosome-binding, thus repressing translation. Its main target seems to be the major flagellin gene, while its function is anatagonized by FliW. This Clostridioides difficile (strain 630) (Peptoclostridium difficile) protein is Translational regulator CsrA.